The sequence spans 210 residues: Chaperone protein TorD (210 aa).

This sequence belongs to the TorD/DmsD family. TorD subfamily.

It localises to the cytoplasm. Involved in the biogenesis of TorA. Acts on TorA before the insertion of the molybdenum cofactor and, as a result, probably favors a conformation of the apoenzyme that is competent for acquiring the cofactor. This Salmonella schwarzengrund (strain CVM19633) protein is Chaperone protein TorD.